The primary structure comprises 190 residues: Interferon alpha-7 (190 aa).

Residues 1-23 form the signal peptide; sequence MARLCAFLMVLAVMSYWPTCCLG. Intrachain disulfides connect cysteine 24–cysteine 122 and cysteine 52–cysteine 162. Residue asparagine 101 is glycosylated (N-linked (GlcNAc...) asparagine).

It belongs to the alpha/beta interferon family.

The protein resides in the secreted. Produced by macrophages, IFN-alpha have antiviral activities. Interferon stimulates the production of two enzymes: a protein kinase and an oligoadenylate synthetase. The protein is Interferon alpha-7 (Ifna7) of Mus musculus (Mouse).